Consider the following 144-residue polypeptide: Ferredoxin-thioredoxin reductase catalytic chain, chloroplastic (144 aa).

The transit peptide at 1-31 directs the protein to the chloroplast; that stretch reads MKALQASIAYSFPISSPAASPRRFSRVIRAQ. Cysteine 83 contributes to the [4Fe-4S] cluster binding site. Cysteine 85 functions as the Nucleophile in the catalytic mechanism. Residues cysteine 85 and cysteine 115 are joined by a disulfide bond. [4Fe-4S] cluster-binding residues include cysteine 102, cysteine 104, and cysteine 113.

Belongs to the ferredoxin thioredoxin reductase beta subunit family. In terms of assembly, heterodimer of subunit A (variable subunit) and subunit B (catalytic subunit). Heterodimeric FTR forms a complex with ferredoxin and thioredoxin. [4Fe-4S] cluster is required as a cofactor.

The protein localises to the plastid. It is found in the chloroplast. It carries out the reaction [thioredoxin]-disulfide + 2 reduced [2Fe-2S]-[ferredoxin] + 2 H(+) = [thioredoxin]-dithiol + 2 oxidized [2Fe-2S]-[ferredoxin]. Catalytic subunit of the ferredoxin-thioredoxin reductase (FTR), which catalyzes the two-electron reduction of thioredoxins by the electrons provided by reduced ferredoxin. In Spinacia oleracea (Spinach), this protein is Ferredoxin-thioredoxin reductase catalytic chain, chloroplastic (FTRC).